Reading from the N-terminus, the 511-residue chain is Cysteine--tRNA ligase 2, cytoplasmic (511 aa).

Residue cysteine 34 participates in Zn(2+) binding. The short motif at 36-46 is the 'HIGH' region element; it reads ITAYDFSHIGH. Cysteine 214, histidine 239, and glutamate 243 together coordinate Zn(2+). Residues 271–275 carry the 'KMSKS' region motif; the sequence is KMAKS. Residue lysine 274 coordinates ATP. TPR repeat units lie at residues 315 to 348 and 368 to 401; these read ESSS…DGGK and SKML…LKKM.

It belongs to the class-I aminoacyl-tRNA synthetase family. It depends on Zn(2+) as a cofactor.

It localises to the cytoplasm. Its subcellular location is the cytosol. The catalysed reaction is tRNA(Cys) + L-cysteine + ATP = L-cysteinyl-tRNA(Cys) + AMP + diphosphate. The sequence is that of Cysteine--tRNA ligase 2, cytoplasmic from Arabidopsis thaliana (Mouse-ear cress).